A 910-amino-acid polypeptide reads, in one-letter code: Short transient receptor potential channel 3 (910 aa).

A disordered region spans residues 1–93 (MSTKVKKCRE…VRGPAFMFGA (93 aa)). Residues 1–448 (MSTKVKKCRE…KILRSPFMKF (448 aa)) lie on the Cytoplasmic side of the membrane. The segment covering 19 to 29 (PEEEEDGEAEG) has biased composition (acidic residues). Over residues 48 to 58 (PPCPRAPPSPG) the composition is skewed to pro residues. Residues 59–68 (PDASSEGSPS) show a composition bias toward low complexity. 4 ANK repeats span residues 100-129 (AEEERFLDAAEYGNIPVVRKMLEESRTLNV), 135-164 (MGQNALQLAVGNEHLEVTELLLKKENLARI), 166-192 (DALLLAISKGYVRIVEAILGHPGFAAS), and 221-250 (PDITPIILAAHCHKYEVVHLLLLKGARIER). Glu147 lines the Ca(2+) pocket. Residues 449 to 466 (VAHAASFIIFLGLLVFNA) traverse the membrane as a helical segment. The Extracellular segment spans residues 467 to 497 (SDRFEGITTLPNITVIDYPKQIFRVKTTQFT). Asn478 is a glycosylation site (N-linked (GlcNAc...) asparagine). Residues 498–516 (WTEMLIMVWVLGMMWSECK) traverse the membrane as a helical segment. Ca(2+) is bound by residues Glu514, Glu517, and Asn532. The Cytoplasmic segment spans residues 517-529 (ELWLEGPREYIVQ). The helical transmembrane segment at 530 to 551 (LWNVLDFGMLSIFIAAFTARFL) threads the bilayer. Topologically, residues 552–595 (AFLQATKAQQYVDSHVQESDLSEVTLPPEVQYFTYARDKWLPSD) are extracellular. A helical transmembrane segment spans residues 596–619 (PQIISEGLYAIAVVLSFSRIAYIL). Residues 620 to 638 (PANESFGPLQISLGRTVKD) lie on the Cytoplasmic side of the membrane. One copy of the ANK 5 repeat lies at 623–652 (ESFGPLQISLGRTVKDIFKFMVLFIMVFLA). Residues 639–662 (IFKFMVLFIMVFLAFMIGMFILYS) traverse the membrane as a helical segment. The Extracellular segment spans residues 663 to 702 (YYLGAKVNPAFTTVEESFKTLFWSIFGLSEVTSVVLKYDH). Residues 703 to 728 (KFIENIGYVLYGIYNVTMVVVLLNML) form a helical membrane-spanning segment. At 729 to 910 (IAMINSSYQE…KLNPSVLRCE (182 aa)) the chain is on the cytoplasmic side. Glu860, Glu863, Glu865, and Asp872 together coordinate Ca(2+).

It belongs to the transient receptor (TC 1.A.4) family. STrpC subfamily. TRPC3 sub-subfamily. As to quaternary structure, homotetramer. Interacts with ITPR1, ITPR3, MX1 and RNF24. Interacts with JPH2; the interaction is involved in maintaining Ca(2+) homeostasis in skeletal muscle and is mediated by JPH2 'Ser-165' phosphorylation. Abundantly expressed in brain. Concentrated in cerebellar Purkinje cells and sparsely localized in cerebellar granule lyer, pontine nuclei and thalamus. Lower levels detected in other tissues.

The protein resides in the cell membrane. The enzyme catalyses Ca(2+)(in) = Ca(2+)(out). With respect to regulation, activated by diacylglycerol (DAG) in a membrane-delimited fashion, independently of protein kinase C. Activated by inositol 1,4,5-triphosphate receptors (ITPR) with bound IP3. May be activated by internal calcium store depletion. Inhibited by intracellular Ca(2+). Forms a receptor-activated non-selective calcium permeant cation channel. May be operated by a phosphatidylinositol second messenger system activated by receptor tyrosine kinases or G-protein coupled receptors. The sequence is that of Short transient receptor potential channel 3 (Trpc3) from Mus musculus (Mouse).